The sequence spans 626 residues: Lipoprotein LpqB (626 aa).

Positions 1 to 23 (MIGQANRIAAAVSTACLAVLLAG) are cleaved as a signal peptide. Cysteine 24 carries the N-palmitoyl cysteine lipid modification. The S-diacylglycerol cysteine moiety is linked to residue cysteine 24. A disordered region spans residues 428–457 (EAEREEDLADDTEPGDTAVGSTERRETDRG). A compositionally biased stretch (acidic residues) spans 430–441 (EREEDLADDTEP).

Belongs to the LpqB lipoprotein family.

It localises to the cell membrane. This Thermobifida fusca (strain YX) protein is Lipoprotein LpqB.